Consider the following 345-residue polypeptide: Tryptophan--tRNA ligase (345 aa).

Residues Q21 to T23 and G30 to N31 each bind ATP. The 'HIGH' region motif lies at P22 to N31. D147 lines the L-tryptophan pocket. Residues G159–D161, I198, and K207–S211 contribute to the ATP site. Positions K207–S211 match the 'KMSKS' region motif.

The protein belongs to the class-I aminoacyl-tRNA synthetase family. As to quaternary structure, homodimer.

Its subcellular location is the cytoplasm. It catalyses the reaction tRNA(Trp) + L-tryptophan + ATP = L-tryptophyl-tRNA(Trp) + AMP + diphosphate + H(+). In terms of biological role, catalyzes the attachment of tryptophan to tRNA(Trp). The protein is Tryptophan--tRNA ligase of Corynebacterium glutamicum (strain ATCC 13032 / DSM 20300 / JCM 1318 / BCRC 11384 / CCUG 27702 / LMG 3730 / NBRC 12168 / NCIMB 10025 / NRRL B-2784 / 534).